The chain runs to 750 residues: Protein O-mannosyl-transferase 2 (750 aa).

Positions 1 to 23 (MPPATGGGLAESELRPRRGRCGP) are disordered. S41 is subject to Phosphoserine. A helical transmembrane segment spans residues 54 to 74 (AVGWWALLALVTLLSFATRFH). An N-linked (GlcNAc...) asparagine glycan is attached at N98. 5 consecutive transmembrane segments (helical) span residues 100–120 (TFFFDVHPPLGKMLIGLAGYL), 146–166 (GFCAFLGSWLVPFAYLTVLDL), 191–211 (QYILLDPILMFFIMAAMLSMV), 231–251 (LTGVSLAGALGVKFVGLFIIL), and 283–303 (VLCLIVLPLALYTATFAVHFM). N-linked (GlcNAc...) asparagine glycosylation is present at N330. 3 consecutive MIR domains span residues 334 to 390 (PEHL…IKKH), 403 to 459 (VEFV…IEVV), and 464 to 521 (GNRI…VEDH). N445 is a glycosylation site (N-linked (GlcNAc...) asparagine). N-linked (GlcNAc...) asparagine glycans are attached at residues N528 and N583. The next 4 helical transmembrane spans lie at 596–616 (VVWWLNLLSIALYLLSGSIIA), 643–663 (VLLGWTLHYFPFFLMGRVLYF), 665–685 (HYFPAMLFSSMLTGILWDTLL), and 700–720 (GIHVAGILSLLLGTAYSFYLF).

Belongs to the glycosyltransferase 39 family. In terms of assembly, interacts with POMT1. Post-translationally, N-glycosylated. Highly expressed in testis; detected at low levels in most tissues.

Its subcellular location is the endoplasmic reticulum membrane. It carries out the reaction a di-trans,poly-cis-dolichyl beta-D-mannosyl phosphate + L-seryl-[protein] = 3-O-(alpha-D-mannosyl)-L-seryl-[protein] + a di-trans,poly-cis-dolichyl phosphate + H(+). It catalyses the reaction a di-trans,poly-cis-dolichyl beta-D-mannosyl phosphate + L-threonyl-[protein] = 3-O-(alpha-D-mannosyl)-L-threonyl-[protein] + a di-trans,poly-cis-dolichyl phosphate + H(+). The protein operates within protein modification; protein glycosylation. Slightly activated by Mg(2+) and inhibited by both Ca(+) and Mn(2+). EDTA ha no effect on activity in vitro. Its function is as follows. Transfers mannosyl residues to the hydroxyl group of serine or threonine residues. Coexpression of both POMT1 and POMT2 is necessary for enzyme activity, expression of either POMT1 or POMT2 alone is insufficient. Essentially dedicated to O-mannosylation of alpha-DAG1 and few other proteins but not of cadherins and protocaherins. In Homo sapiens (Human), this protein is Protein O-mannosyl-transferase 2 (POMT2).